Reading from the N-terminus, the 78-residue chain is NAD(P)H-quinone oxidoreductase subunit O (78 aa).

The protein belongs to the complex I NdhO subunit family. NDH-1 can be composed of about 15 different subunits; different subcomplexes with different compositions have been identified which probably have different functions.

It localises to the cellular thylakoid membrane. It catalyses the reaction a plastoquinone + NADH + (n+1) H(+)(in) = a plastoquinol + NAD(+) + n H(+)(out). The catalysed reaction is a plastoquinone + NADPH + (n+1) H(+)(in) = a plastoquinol + NADP(+) + n H(+)(out). Functionally, NDH-1 shuttles electrons from an unknown electron donor, via FMN and iron-sulfur (Fe-S) centers, to quinones in the respiratory and/or the photosynthetic chain. The immediate electron acceptor for the enzyme in this species is believed to be plastoquinone. Couples the redox reaction to proton translocation, and thus conserves the redox energy in a proton gradient. Cyanobacterial NDH-1 also plays a role in inorganic carbon-concentration. The protein is NAD(P)H-quinone oxidoreductase subunit O of Prochlorococcus marinus (strain MIT 9215).